The primary structure comprises 364 residues: MNRAPLKRSRILHMALTGASDPSAEAEANGEKPFLLRALQIALVVSLYWVTSISMVFLNKYLLDSPSLRLDTPIFVTFYQCLVTTLLCKGLSALAACCPGAVDFPSLRLDLRVARSVLPLSVVFIGMITFNNLCLKYVGVAFYNVGRSLTTVFNVLLSYLLLKQTTSFYALLTCGIIIGGFWLGVDQEGAEGTLSWLGTVFGVLASLCVSLNAIYTTKVLPAVDGSIWRLTFYNNVNACILFLPLLLLLGELQALRDFAQLGSAHFWGMMTLGGLFGFAIGYVTGLQIKFTSPLTHNVSGTAKACAQTVLAVLYYEETKSFLWWTSNMMVLGGSSAYTWVRGWEMKKTPEEPSPKDSEKSAMGV.

A run of 8 helical transmembrane segments spans residues 34-56 (FLLR…ISMV), 76-98 (VTFY…AACC), 111-130 (LRVA…MITF), 140-162 (VAFY…YLLL), 167-185 (SFYA…WLGV), 195-214 (SWLG…LNAI), 227-249 (IWRL…LLLL), and 264-286 (AHFW…VTGL).

This sequence belongs to the TPT transporter family. SLC35C subfamily.

The protein resides in the golgi apparatus membrane. It carries out the reaction GMP(out) + GDP-beta-L-fucose(in) = GMP(in) + GDP-beta-L-fucose(out). Functionally, antiporter specific for GDP-l-fucose and depending on the concomitant reverse transport of GMP. Involved in GDP-fucose import from the cytoplasm into the Golgi lumen. The protein is GDP-fucose transporter 1 of Homo sapiens (Human).